The primary structure comprises 540 residues: Amino acid transporter AVT1B (540 aa).

The span at 1–11 (MNHSTSDQSLY) shows a compositional bias: polar residues. The interval 1–55 (MNHSTSDQSLYIESDDGDDERKHLSDDEDDDGTLSDTSDAYNQNQHHLSKASPYS) is disordered. Transmembrane regions (helical) follow at residues 155–175 (AVLN…PYAV), 180–200 (WLGL…GLLL), 227–247 (ILVS…YIIL), 273–293 (LFAL…DLSV), 297–317 (ISAG…WVGL), 332–352 (LATL…HGVF), 367–387 (AVLL…AVMG), 412–432 (IALW…LSPV), 452–474 (IAIR…FFGL), 478–500 (LIGS…LSIL), and 511–531 (ICIL…YSAL).

This sequence belongs to the amino acid/polyamine transporter 2 family. Amino acid/auxin permease (AAAP) (TC 2.A.18.5) subfamily.

The protein resides in the membrane. The sequence is that of Amino acid transporter AVT1B from Arabidopsis thaliana (Mouse-ear cress).